We begin with the raw amino-acid sequence, 222 residues long: Putative N-acetylmannosamine-6-phosphate 2-epimerase (222 aa).

It belongs to the NanE family.

The catalysed reaction is an N-acyl-D-glucosamine 6-phosphate = an N-acyl-D-mannosamine 6-phosphate. The protein operates within amino-sugar metabolism; N-acetylneuraminate degradation; D-fructose 6-phosphate from N-acetylneuraminate: step 3/5. Its function is as follows. Converts N-acetylmannosamine-6-phosphate (ManNAc-6-P) to N-acetylglucosamine-6-phosphate (GlcNAc-6-P). The chain is Putative N-acetylmannosamine-6-phosphate 2-epimerase from Staphylococcus aureus (strain USA300).